A 149-amino-acid polypeptide reads, in one-letter code: Calmodulin (149 aa).

At A2 the chain carries N-acetylalanine. 4 EF-hand domains span residues 8–43, 44–79, 81–116, and 117–149; these read EQIA…LGQN, PTEA…KMKD, DSEE…LGEK, and LTDE…MTSK. The Ca(2+) site is built by D21, D23, D25, T27, E32, D57, D59, D61, T63, E68, D94, D96, D98, and E105. K116 carries the post-translational modification N6,N6,N6-trimethyllysine. 5 residues coordinate Ca(2+): D130, D132, D134, Q136, and E141.

It belongs to the calmodulin family.

Functionally, calmodulin mediates the control of a large number of enzymes, ion channels and other proteins by Ca(2+). Among the enzymes to be stimulated by the calmodulin-Ca(2+) complex are a number of protein kinases and phosphatases. This chain is Calmodulin, found in Renilla reniformis (Sea pansy).